The primary structure comprises 266 residues: Pyridoxal phosphate phosphatase YigL (266 aa).

Asp8 (nucleophile) is an active-site residue. Asp8 provides a ligand contact to Mg(2+). Position 9 (Leu9) interacts with phosphate. Residue Asp10 participates in Mg(2+) binding. Phosphate is bound by residues 42–43 and Lys191; that span reads TG. Asp214 contributes to the Mg(2+) binding site. Asn217 is a phosphate binding site.

It belongs to the HAD-like hydrolase superfamily. Cof family. Requires Mg(2+) as cofactor. The cofactor is Mn(2+). Co(2+) is required as a cofactor. Zn(2+) serves as cofactor.

It carries out the reaction pyridoxal 5'-phosphate + H2O = pyridoxal + phosphate. It catalyses the reaction sugar phosphate + H2O = sugar + phosphate.. Catalyzes the dephosphorylation of pyridoxal-phosphate (PLP) and sugar phosphate. The chain is Pyridoxal phosphate phosphatase YigL (yigL) from Escherichia coli O157:H7.